Consider the following 592-residue polypeptide: Aspartate--tRNA ligase (592 aa).

Glutamate 171 is an L-aspartate binding site. Residues 195-198 are aspartate; it reads QLFK. Arginine 217 lines the L-aspartate pocket. Residues 217-219 and glutamine 226 each bind ATP; that span reads RDE. Residue histidine 448 participates in L-aspartate binding. Glutamate 482 contributes to the ATP binding site. Arginine 489 lines the L-aspartate pocket. 534 to 537 lines the ATP pocket; the sequence is GLDR.

The protein belongs to the class-II aminoacyl-tRNA synthetase family. Type 1 subfamily. In terms of assembly, homodimer.

The protein resides in the cytoplasm. The catalysed reaction is tRNA(Asp) + L-aspartate + ATP = L-aspartyl-tRNA(Asp) + AMP + diphosphate. Functionally, catalyzes the attachment of L-aspartate to tRNA(Asp) in a two-step reaction: L-aspartate is first activated by ATP to form Asp-AMP and then transferred to the acceptor end of tRNA(Asp). The polypeptide is Aspartate--tRNA ligase (Pseudoalteromonas translucida (strain TAC 125)).